Reading from the N-terminus, the 502-residue chain is Nucleoside transporter 2 (502 aa).

Residues 1–30 (MTTSSDSAMVNHTPSPWYKFGFKSFAEFNT) are Cytoplasmic-facing. A helical membrane pass occupies residues 31-51 (YVTFVFLGMSIMMVASAVTSA). The Extracellular portion of the chain corresponds to 52-81 (PDFLTRYYVYATGDPDAVAETPLFWNNANT). A helical transmembrane segment spans residues 82-102 (FYNAGTYVLQVLTELFSLTPF). Residues 103-111 (MRRIPLSVR) are Cytoplasmic-facing. Residues 112 to 132 (LFVGLGIPFAELLLIIIVPAA) form a helical membrane-spanning segment. Residues 133–137 (TIKSQ) are Extracellular-facing. A helical transmembrane segment spans residues 138-158 (HGAIAVIMVVACVGGFSKALC). Over 159–178 (DSCTNALVGPFPTKFMNGAQ) the chain is Cytoplasmic. The chain crosses the membrane as a helical span at residues 179–199 (WGLTVIALLMSIIQIILKVSM). The Extracellular portion of the chain corresponds to 200–210 (GTSFHDILTMS). The chain crosses the membrane as a helical span at residues 211–231 (RIYFGICIGIQLFAIFELAIL). Topologically, residues 232 to 352 (RFNPFAQKYI…SVFKRVYPML (121 aa)) are cytoplasmic. The tract at residues 252 to 273 (AQNNESTLEETAPSMNEPAAGD) is disordered. The chain crosses the membrane as a helical span at residues 353–373 (VCVFLIYFTSLLTFPGVFFLV). Over 374–380 (STTSGWY) the chain is Extracellular. The helical transmembrane segment at 381 to 401 (MTVIVTLFNAGDFISRMVLMF) threads the bilayer. Residues 402-408 (RPLRPSP) lie on the Cytoplasmic side of the membrane. Residues 409–429 (KVVVAGTLGRLIIIPFLVLCV) form a helical membrane-spanning segment. Residues 430-436 (RGIIRGE) are Extracellular-facing. A helical membrane pass occupies residues 437–457 (ALPYVLITLLGLTNGYFGCMA). Residues 458 to 477 (CIHCPRTTTLRYAGERSLAA) lie on the Cytoplasmic side of the membrane. The helical transmembrane segment at 478–498 (MLSGISIMLGLCFGSNLSLAI) threads the bilayer. Topologically, residues 499-502 (TLTH) are extracellular.

It belongs to the SLC29A/ENT transporter (TC 2.A.57) family.

The protein resides in the cell membrane. It catalyses the reaction inosine(in) = inosine(out). The catalysed reaction is guanosine(in) = guanosine(out). Functionally, high affinity transporter for inosine and guanosine. The sequence is that of Nucleoside transporter 2 from Crithidia fasciculata.